The following is a 131-amino-acid chain: Lymphocyte antigen 6C1 (131 aa).

An N-terminal signal peptide occupies residues 1-26 (MDTSHTTKSCVLILLVALLCAERAQG). Positions 27–115 (LQCYECYGVP…PTAGSTWTMA (89 aa)) constitute a UPAR/Ly6 domain. 5 cysteine pairs are disulfide-bonded: cysteine 29–cysteine 53, cysteine 32–cysteine 41, cysteine 46–cysteine 74, cysteine 78–cysteine 95, and cysteine 96–cysteine 101. Glycine 109 is lipidated: GPI-anchor amidated glycine. Residues 110–131 (STWTMAGVLLFSLSSVVLQTLL) constitute a propeptide, removed in mature form.

Its subcellular location is the cell membrane. The protein is Lymphocyte antigen 6C1 (Ly6c1) of Mus musculus (Mouse).